The chain runs to 115 residues: Putative UPF0377 protein YHL045W (115 aa).

The chain crosses the membrane as a helical span at residues 10 to 30; it reads ACIFIDSVCEGIVFWGLCLFV.

Belongs to the UPF0377 family.

It is found in the membrane. The protein is Putative UPF0377 protein YHL045W of Saccharomyces cerevisiae (strain ATCC 204508 / S288c) (Baker's yeast).